A 312-amino-acid chain; its full sequence is Olfactory receptor 7G3 (312 aa).

The Extracellular portion of the chain corresponds to 1–25 (MKAGNFSDTPEFFLLGLSGDPELQP). An N-linked (GlcNAc...) asparagine glycan is attached at asparagine 5. Residues 26-46 (ILFMLFLSMYLATMLGNLLII) traverse the membrane as a helical segment. The Cytoplasmic portion of the chain corresponds to 47–54 (LAVNSDSH). The helical transmembrane segment at 55–75 (LHTPMYFLLSILSLVDICFTS) threads the bilayer. Topologically, residues 76–99 (TTMPKMLVNIQAQAQSINYTGCLT) are extracellular. An N-linked (GlcNAc...) asparagine glycan is attached at asparagine 93. Cysteine 97 and cysteine 189 are joined by a disulfide. Residues 100-120 (QICFVLVFVGLENGILVMMAY) traverse the membrane as a helical segment. At 121-139 (DRFVAICHPLRYNVIMNPK) the chain is on the cytoplasmic side. The chain crosses the membrane as a helical span at residues 140–160 (LCGLLLLLSFIVSVLDALLHT). Over 161-197 (LMVLQLTFCIDLEIPHFFCELAHILKLACSDVLINNI) the chain is Extracellular. Residues 198 to 217 (LVYLVTSLLGVVPLSGIIFS) form a helical membrane-spanning segment. The Cytoplasmic segment spans residues 218-237 (YTRIVSSVMKIPSAGGKYKA). A helical membrane pass occupies residues 238–258 (FSICGSHLIVVSLFYGTGFGV). Residues 259–271 (YLSSGATHSSRKG) lie on the Extracellular side of the membrane. The chain crosses the membrane as a helical span at residues 272–292 (AIASVMYTVVTPMLNPLIYSL). Residues 293 to 312 (RNKDMLKALRKLISRIPSFH) lie on the Cytoplasmic side of the membrane.

This sequence belongs to the G-protein coupled receptor 1 family.

The protein localises to the cell membrane. Functionally, odorant receptor. The polypeptide is Olfactory receptor 7G3 (OR7G3) (Homo sapiens (Human)).